Here is a 347-residue protein sequence, read N- to C-terminus: Holliday junction branch migration complex subunit RuvB (347 aa).

Positions I4 to Y186 are large ATPase domain (RuvB-L). ATP-binding positions include L25, R26, G67, K70, T71, T72, E133–F135, R176, Y186, and R223. Residue T71 coordinates Mg(2+). The interval T187–G257 is small ATPAse domain (RuvB-S). Residues E260–E347 form a head domain (RuvB-H) region. DNA contacts are provided by R315 and R320.

Belongs to the RuvB family. As to quaternary structure, homohexamer. Forms an RuvA(8)-RuvB(12)-Holliday junction (HJ) complex. HJ DNA is sandwiched between 2 RuvA tetramers; dsDNA enters through RuvA and exits via RuvB. An RuvB hexamer assembles on each DNA strand where it exits the tetramer. Each RuvB hexamer is contacted by two RuvA subunits (via domain III) on 2 adjacent RuvB subunits; this complex drives branch migration. In the full resolvosome a probable DNA-RuvA(4)-RuvB(12)-RuvC(2) complex forms which resolves the HJ.

The protein resides in the cytoplasm. It carries out the reaction ATP + H2O = ADP + phosphate + H(+). Its function is as follows. The RuvA-RuvB-RuvC complex processes Holliday junction (HJ) DNA during genetic recombination and DNA repair, while the RuvA-RuvB complex plays an important role in the rescue of blocked DNA replication forks via replication fork reversal (RFR). RuvA specifically binds to HJ cruciform DNA, conferring on it an open structure. The RuvB hexamer acts as an ATP-dependent pump, pulling dsDNA into and through the RuvAB complex. RuvB forms 2 homohexamers on either side of HJ DNA bound by 1 or 2 RuvA tetramers; 4 subunits per hexamer contact DNA at a time. Coordinated motions by a converter formed by DNA-disengaged RuvB subunits stimulates ATP hydrolysis and nucleotide exchange. Immobilization of the converter enables RuvB to convert the ATP-contained energy into a lever motion, pulling 2 nucleotides of DNA out of the RuvA tetramer per ATP hydrolyzed, thus driving DNA branch migration. The RuvB motors rotate together with the DNA substrate, which together with the progressing nucleotide cycle form the mechanistic basis for DNA recombination by continuous HJ branch migration. Branch migration allows RuvC to scan DNA until it finds its consensus sequence, where it cleaves and resolves cruciform DNA. This chain is Holliday junction branch migration complex subunit RuvB, found in Fervidobacterium nodosum (strain ATCC 35602 / DSM 5306 / Rt17-B1).